The primary structure comprises 137 residues: Peptide methionine sulfoxide reductase MsrB (137 aa).

Positions 7 to 129 (PTENIEKLSD…NSASLNFVDD (123 aa)) constitute a MsrB domain. Positions 46, 49, 95, and 98 each coordinate Zn(2+). Catalysis depends on Cys118, which acts as the Nucleophile.

The protein belongs to the MsrB Met sulfoxide reductase family. It depends on Zn(2+) as a cofactor.

It carries out the reaction L-methionyl-[protein] + [thioredoxin]-disulfide + H2O = L-methionyl-(R)-S-oxide-[protein] + [thioredoxin]-dithiol. The protein is Peptide methionine sulfoxide reductase MsrB of Yersinia pseudotuberculosis serotype O:1b (strain IP 31758).